We begin with the raw amino-acid sequence, 270 residues long: Regulator of G-protein signaling rgs-10 (270 aa).

The 118-residue stretch at 135-252 folds into the RGS domain; sequence SPETLAASEY…LEDPLYLDLV (118 aa).

Functionally, shown to have a role in viability and embryogenesis. This Caenorhabditis elegans protein is Regulator of G-protein signaling rgs-10 (rgs-10).